Reading from the N-terminus, the 201-residue chain is ATP-dependent Clp protease proteolytic subunit 1 (201 aa).

Residue Ser-102 is the Nucleophile of the active site. The active site involves His-127.

The protein belongs to the peptidase S14 family. Fourteen ClpP subunits assemble into 2 heptameric rings which stack back to back to give a disk-like structure with a central cavity, resembling the structure of eukaryotic proteasomes.

It localises to the cytoplasm. It catalyses the reaction Hydrolysis of proteins to small peptides in the presence of ATP and magnesium. alpha-casein is the usual test substrate. In the absence of ATP, only oligopeptides shorter than five residues are hydrolyzed (such as succinyl-Leu-Tyr-|-NHMec, and Leu-Tyr-Leu-|-Tyr-Trp, in which cleavage of the -Tyr-|-Leu- and -Tyr-|-Trp bonds also occurs).. Functionally, cleaves peptides in various proteins in a process that requires ATP hydrolysis. Has a chymotrypsin-like activity. Plays a major role in the degradation of misfolded proteins. This chain is ATP-dependent Clp protease proteolytic subunit 1, found in Mesorhizobium japonicum (strain LMG 29417 / CECT 9101 / MAFF 303099) (Mesorhizobium loti (strain MAFF 303099)).